We begin with the raw amino-acid sequence, 256 residues long: Small ribosomal subunit protein eS1 (256 aa).

A compositionally biased stretch (basic residues) spans 1–18; it reads MAVGKNKRLSKGKKGLKK. Residues 1-20 form a disordered region; sequence MAVGKNKRLSKGKKGLKKKA. An N-acetylalanine; partial modification is found at alanine 2.

It belongs to the eukaryotic ribosomal protein eS1 family. In terms of assembly, component of the small ribosomal subunit. Mature ribosomes consist of a small (40S) and a large (60S) subunit. The 40S subunit contains about 33 different proteins and 1 molecule of RNA (18S). The 60S subunit contains about 49 different proteins and 3 molecules of RNA (25S, 5.8S and 5S).

It is found in the cytoplasm. The polypeptide is Small ribosomal subunit protein eS1 (Podospora anserina (strain S / ATCC MYA-4624 / DSM 980 / FGSC 10383) (Pleurage anserina)).